Here is a 226-residue protein sequence, read N- to C-terminus: Large ribosomal subunit protein uL1 (226 aa).

It belongs to the universal ribosomal protein uL1 family. Part of the 50S ribosomal subunit.

In terms of biological role, binds directly to 23S rRNA. The L1 stalk is quite mobile in the ribosome, and is involved in E site tRNA release. Protein L1 is also a translational repressor protein, it controls the translation of the L11 operon by binding to its mRNA. This Borreliella afzelii (strain PKo) (Borrelia afzelii) protein is Large ribosomal subunit protein uL1.